The sequence spans 243 residues: 1-(5-phosphoribosyl)-5-[(5-phosphoribosylamino)methylideneamino] imidazole-4-carboxamide isomerase (243 aa).

Aspartate 10 serves as the catalytic Proton acceptor. The active-site Proton donor is aspartate 129.

Belongs to the HisA/HisF family.

The protein localises to the cytoplasm. It carries out the reaction 1-(5-phospho-beta-D-ribosyl)-5-[(5-phospho-beta-D-ribosylamino)methylideneamino]imidazole-4-carboxamide = 5-[(5-phospho-1-deoxy-D-ribulos-1-ylimino)methylamino]-1-(5-phospho-beta-D-ribosyl)imidazole-4-carboxamide. It functions in the pathway amino-acid biosynthesis; L-histidine biosynthesis; L-histidine from 5-phospho-alpha-D-ribose 1-diphosphate: step 4/9. In Nocardia farcinica (strain IFM 10152), this protein is 1-(5-phosphoribosyl)-5-[(5-phosphoribosylamino)methylideneamino] imidazole-4-carboxamide isomerase.